The sequence spans 354 residues: Uroporphyrinogen decarboxylase (354 aa).

Substrate is bound by residues 27–31 (RQAGR), Asp77, Tyr154, Thr209, and His327.

It belongs to the uroporphyrinogen decarboxylase family. In terms of assembly, homodimer.

It is found in the cytoplasm. The catalysed reaction is uroporphyrinogen III + 4 H(+) = coproporphyrinogen III + 4 CO2. It participates in porphyrin-containing compound metabolism; protoporphyrin-IX biosynthesis; coproporphyrinogen-III from 5-aminolevulinate: step 4/4. Its function is as follows. Catalyzes the decarboxylation of four acetate groups of uroporphyrinogen-III to yield coproporphyrinogen-III. In Citrobacter koseri (strain ATCC BAA-895 / CDC 4225-83 / SGSC4696), this protein is Uroporphyrinogen decarboxylase.